The following is a 76-amino-acid chain: Acyl carrier protein (76 aa).

Residues M1–K76 form the Carrier domain. Residue S36 is modified to O-(pantetheine 4'-phosphoryl)serine.

The protein belongs to the acyl carrier protein (ACP) family. Post-translationally, 4'-phosphopantetheine is transferred from CoA to a specific serine of apo-ACP by AcpS. This modification is essential for activity because fatty acids are bound in thioester linkage to the sulfhydryl of the prosthetic group.

Its subcellular location is the cytoplasm. The protein operates within lipid metabolism; fatty acid biosynthesis. Functionally, carrier of the growing fatty acid chain in fatty acid biosynthesis. This Wolinella succinogenes (strain ATCC 29543 / DSM 1740 / CCUG 13145 / JCM 31913 / LMG 7466 / NCTC 11488 / FDC 602W) (Vibrio succinogenes) protein is Acyl carrier protein.